A 458-amino-acid chain; its full sequence is MITKTHKVDLGLPEKKKKKKVVKEPETRYSVLNNDDYFADVSPLRATSPSKSVAHGQAPEMPLVKKKKKKKKGVSTLCEEHVEPETTLPARRTEKSPSLRKQVFGHLEFLSGEKKNKKSPLAMSHASGVKTSPDPRQGEEETRVGKKLKKHKKEKKGAQDPTAFSVQDPWFCEAREARDVGDTCSVGKKDEEQAALGQKRKRKSPREHNGKVKKKKKIHQEGDALPGHSKPSRSMESSPRKGSKKKPVKVEAPEYIPISDDPKASAKKKMKSKKKVEQPVIEEPALKRKKKKKRKESGVAGDPWKEETDTDLEVVLEKKGNMDEAHIDQVRRKALQEEIDRESGKTEASETRKWTGTQFGQWDTAGFENEDQKLKFLRLMGGFKNLSPSFSRPASTIARPNMALGKKAADSLQQNLQRDYDRAMSWKYSRGAGLGFSTAPNKIFYIDRNASKSVKLED.

Residues 1–14 (MITKTHKVDLGLPE) show a composition bias toward basic and acidic residues. Residues 1–21 (MITKTHKVDLGLPEKKKKKKV) are disordered. Lysine 7 participates in a covalent cross-link: Glycyl lysine isopeptide (Lys-Gly) (interchain with G-Cter in SUMO2). Serine 42 and serine 50 each carry phosphoserine. Residues 46 to 305 (ATSPSKSVAH…ESGVAGDPWK (260 aa)) are disordered. Over residues 64 to 73 (VKKKKKKKKG) the composition is skewed to basic residues. A Glycyl lysine isopeptide (Lys-Gly) (interchain with G-Cter in SUMO2) cross-link involves residue lysine 101. Phosphoserine is present on serine 111. Residue lysine 130 forms a Glycyl lysine isopeptide (Lys-Gly) (interchain with G-Cter in SUMO2) linkage. Serine 132 is modified (phosphoserine). Positions 145–155 (GKKLKKHKKEK) are enriched in basic residues. The span at 173–192 (EAREARDVGDTCSVGKKDEE) shows a compositional bias: basic and acidic residues. Positions 198 to 218 (QKRKRKSPREHNGKVKKKKKI) are enriched in basic residues. Lysine 249 participates in a covalent cross-link: Glycyl lysine isopeptide (Lys-Gly) (interchain with G-Cter in SUMO1); alternate. Residue lysine 249 forms a Glycyl lysine isopeptide (Lys-Gly) (interchain with G-Cter in SUMO2); alternate linkage. Serine 265 carries the phosphoserine modification. A compositionally biased stretch (basic residues) spans 265-274 (SAKKKMKSKK). Glycyl lysine isopeptide (Lys-Gly) (interchain with G-Cter in SUMO2) cross-links involve residues lysine 275, lysine 287, and lysine 305. Residues 306–458 (EETDTDLEVV…NASKSVKLED (153 aa)) form an interaction with ZNF106 region. Threonine 308 and threonine 310 each carry phosphothreonine. Residues lysine 319, lysine 353, lysine 373, lysine 375, and lysine 407 each participate in a glycyl lysine isopeptide (Lys-Gly) (interchain with G-Cter in SUMO2) cross-link. A compositionally biased stretch (basic and acidic residues) spans 336–353 (QEEIDRESGKTEASETRK). The segment at 336–355 (QEEIDRESGKTEASETRKWT) is disordered. At arginine 430 the chain carries Omega-N-methylarginine. Residue lysine 442 forms a Glycyl lysine isopeptide (Lys-Gly) (interchain with G-Cter in SUMO2) linkage.

As to quaternary structure, interacts with ZNF106.

The protein resides in the nucleus. The protein localises to the nucleolus. The sequence is that of Lysine-rich nucleolar protein 1 (KNOP1) from Homo sapiens (Human).